Here is a 1378-residue protein sequence, read N- to C-terminus: Carboxypeptidase D (1378 aa).

Residues 1-37 (MASGWDERPPWRLESLRLLPPPPLLLLLLLLRSSAQA) form the signal peptide. The Extracellular segment spans residues 38–1297 (AHIKKAEATT…DNRIFGLPRE (1260 aa)). The Peptidase M14 1 domain occupies 62–380 (HYYHEAALGE…ESLITLIEKV (319 aa)). The Zn(2+) site is built by His139 and Glu142. A Cell attachment site motif is present at residues 162-164 (RGD). Residues Asn172 and Asn217 are each glycosylated (N-linked (GlcNAc...) asparagine). The tract at residues 189-232 (RAREGDCGLGDSGPPGTSGRDNSRGRDLNRSFPDQFSTGEPPSL) is disordered. Residue His257 coordinates Zn(2+). Tyr265 bears the Phosphotyrosine mark. Ser270 carries the phosphoserine modification. The active-site Proton donor/acceptor is the Glu350. N-linked (GlcNAc...) asparagine glycans are attached at residues Asn399, Asn410, Asn429, and Asn522. The Peptidase M14 2 domain occupies 502–792 (HHHHFPDMEI…RSLIQFMKQV (291 aa)). His564 and Glu567 together coordinate Zn(2+). N-linked (GlcNAc...) asparagine glycosylation occurs at Asn626. His671 serves as a coordination point for Zn(2+). The active-site Proton donor/acceptor is the Glu762. N-linked (GlcNAc...) asparagine glycosylation is found at Asn811, Asn855, Asn867, Asn879, Asn953, and Asn976. The disordered stretch occupies residues 875 to 898 (TDANNESKKGKGHSTSTDDTSDPT). The Peptidase M14 3 domain maps to 930–1209 (RYHSYKDLSE…KSLLSMLVEV (280 aa)). The span at 1039-1048 (RERAQEKDCT) shows a compositional bias: basic and acidic residues. A disordered region spans residues 1039-1068 (RERAQEKDCTSKTGHTNARGRDLDTDFTSN). Residues Asn1068 and Asn1140 are each glycosylated (N-linked (GlcNAc...) asparagine). The chain crosses the membrane as a helical span at residues 1298–1318 (LVVTVSGATMSALILTACIIW). Residues Cys1315, Cys1319, and Cys1321 are each lipidated (S-palmitoyl cysteine). Residues 1319–1378 (CICSIKSNRHKDGFHRLRQHHDEYEDEIRMMSTGSKKSLLSHEFQDETDTEEETLYSSKH) are Cytoplasmic-facing. A phosphoserine mark is found at Ser1356 and Ser1359. Residues 1357–1378 (LLSHEFQDETDTEEETLYSSKH) form a disordered region. A phosphothreonine mark is found at Thr1366 and Thr1368.

This sequence belongs to the peptidase M14 family. It depends on Zn(2+) as a cofactor. In terms of tissue distribution, isoform 1 is widely expressed with highest levels in the hippocampus, spinal cord, atrium, colon, testis and ovaries. Detected in the liver of females but not males. Isoform 2 is not detected in brain or lung.

It is found in the cell membrane. The protein localises to the nucleus. The enzyme catalyses Releases C-terminal Arg and Lys from polypeptides.. In Rattus norvegicus (Rat), this protein is Carboxypeptidase D.